A 902-amino-acid chain; its full sequence is Leucine-rich repeat-containing G-protein coupled receptor 5A (902 aa).

The signal sequence occupies residues 1-22 (MDTSRTSLFLCSVLYSLQLVGS). At 23–557 (ARPGKQHRSC…DHLFGSWLTR (535 aa)) the chain is on the extracellular side. Disulfide bonds link Cys-32/Cys-38 and Cys-36/Cys-49. The region spanning 32-61 (CPTPCECEQDGMLVRVDCSDRGLTGLPRNI) is the LRRNT domain. LRR repeat units lie at residues 41–61 (DGML…PRNI), 62–85 (SIFT…ALHN), 86–109 (LHFL…AFAG), 111–133 (GSLK…ALQN), 134–157 (LRSL…SFNG), 159–181 (FSLR…ALES), 182–205 (LSAL…AFGN), 207–229 (SSLV…CFDG), 230–253 (LHSL…IKTL), 254–276 (KNLK…AFIG), 278–300 (PSLI…AFQH), 301–324 (LPEL…LTGT), 325–347 (TSLE…VCNQ), 348–372 (LPNL…GCQR), 374–393 (QKID…TFQQ), 394–417 (LVGL…SFSS), and 418–441 (LPSL…GLHG). Asn-60 and Asn-74 each carry an N-linked (GlcNAc...) asparagine glycan. Residue Asn-205 is glycosylated (N-linked (GlcNAc...) asparagine). An intrachain disulfide couples Cys-345 to Cys-370. Cys-476 and Cys-537 are oxidised to a cystine. Asn-496 carries an N-linked (GlcNAc...) asparagine glycan. Residues 558–578 (IGVWLIVLLSFVCNALVIATV) traverse the membrane as a helical segment. Residues 579-589 (FRPLSYVPSIK) are Cytoplasmic-facing. The helical transmembrane segment at 590-610 (LLIGLIAIINTLMGLSSGVLA) threads the bilayer. The stretch at 598 to 619 (INTLMGLSSGVLATVDALTFGN) is one LRR 18 repeat. Topologically, residues 611–634 (TVDALTFGNFAQYGAWWESGVGCQ) are extracellular. Residues Cys-633 and Cys-708 are joined by a disulfide bond. Residues 635-655 (ITGFLSVFAAETSVFLLTVAA) form a helical membrane-spanning segment. Over 656–678 (LERGFSIKCTTKFETKSSFLSVK) the chain is Cytoplasmic. The chain crosses the membrane as a helical span at residues 679–699 (LSIVFCFLLSIIIAVSPLMSG). Residues 700–718 (STYGTSPFCFPLLFGDPSS) are Extracellular-facing. Residues 719-739 (MVFMVALVLLNSLCFLVMTVA) form a helical membrane-spanning segment. The Cytoplasmic portion of the chain corresponds to 740 to 763 (YTKLYCSLEKGELENVWDCSMVKH). The chain crosses the membrane as a helical span at residues 764–784 (IALLLFTNCILYCPVAFLSFS). The Extracellular portion of the chain corresponds to 785 to 798 (SLLNLTFISPEVNK). N-linked (GlcNAc...) asparagine glycosylation is found at Asn-788 and Asn-797. The helical transmembrane segment at 799 to 819 (SILLLIIPLPACLNPLLYILF) threads the bilayer. The Cytoplasmic portion of the chain corresponds to 820 to 902 (NPHFKEDIGS…LSAVAFVPCH (83 aa)).

Belongs to the G-protein coupled receptor 1 family. As to expression, expressed in the developing epithelial stem cells of the intestine.

The protein localises to the cell membrane. It is found in the golgi apparatus. It localises to the trans-Golgi network membrane. Functionally, receptor for R-spondins that potentiates the canonical Wnt signaling pathway and acts as a stem cell marker of the intestinal epithelium and the hair follicle. Upon binding to R-spondins (RSPO1, RSPO2, RSPO3 or RSPO4), associates with phosphorylated LRP6 and frizzled receptors that are activated by extracellular Wnt receptors, triggering the canonical Wnt signaling pathway to increase expression of target genes. In contrast to classical G-protein coupled receptors, does not activate heterotrimeric G-proteins to transduce the signal. Involved in the development and/or maintenance of the adult intestinal stem cells during postembryonic development. The polypeptide is Leucine-rich repeat-containing G-protein coupled receptor 5A (lgr5-a) (Xenopus laevis (African clawed frog)).